The chain runs to 133 residues: Holo-[acyl-carrier-protein] synthase (133 aa).

Mg(2+) is bound by residues Asp-8 and Glu-56.

The protein belongs to the P-Pant transferase superfamily. AcpS family. Requires Mg(2+) as cofactor.

The protein resides in the cytoplasm. It catalyses the reaction apo-[ACP] + CoA = holo-[ACP] + adenosine 3',5'-bisphosphate + H(+). In terms of biological role, transfers the 4'-phosphopantetheine moiety from coenzyme A to a Ser of acyl-carrier-protein. In Clostridium perfringens (strain 13 / Type A), this protein is Holo-[acyl-carrier-protein] synthase.